We begin with the raw amino-acid sequence, 303 residues long: GTPase Era (303 aa).

In terms of domain architecture, Era-type G spans 7-176; sequence KSGFVAIIGR…LDNVVSHLDE (170 aa). A G1 region spans residues 15–22; it reads GRPNVGKS. Residue 15 to 22 participates in GTP binding; that stretch reads GRPNVGKS. A G2 region spans residues 41–45; the sequence is QTTRN. Residues 62 to 65 are G3; sequence DTPG. GTP-binding positions include 62–66 and 125–128; these read DTPGV and NKVD. Positions 125 to 128 are G4; that stretch reads NKVD. Residues 155-157 form a G5 region; that stretch reads ISA. Residues 207–284 form the KH type-2 domain; the sequence is TRQEVPHSVA…FLETWVKVEP (78 aa).

This sequence belongs to the TRAFAC class TrmE-Era-EngA-EngB-Septin-like GTPase superfamily. Era GTPase family. In terms of assembly, monomer.

It localises to the cytoplasm. Its subcellular location is the cell membrane. In terms of biological role, an essential GTPase that binds both GDP and GTP, with rapid nucleotide exchange. Plays a role in 16S rRNA processing and 30S ribosomal subunit biogenesis and possibly also in cell cycle regulation and energy metabolism. In Leuconostoc citreum (strain KM20), this protein is GTPase Era.